The following is a 155-amino-acid chain: S-ribosylhomocysteine lyase (155 aa).

3 residues coordinate Fe cation: H57, H61, and C124.

It belongs to the LuxS family. As to quaternary structure, homodimer. It depends on Fe cation as a cofactor.

It carries out the reaction S-(5-deoxy-D-ribos-5-yl)-L-homocysteine = (S)-4,5-dihydroxypentane-2,3-dione + L-homocysteine. Involved in the synthesis of autoinducer 2 (AI-2) which is secreted by bacteria and is used to communicate both the cell density and the metabolic potential of the environment. The regulation of gene expression in response to changes in cell density is called quorum sensing. Catalyzes the transformation of S-ribosylhomocysteine (RHC) to homocysteine (HC) and 4,5-dihydroxy-2,3-pentadione (DPD). The chain is S-ribosylhomocysteine lyase from Listeria monocytogenes serotype 4a (strain HCC23).